The sequence spans 97 residues: Large ribosomal subunit protein uL23 (97 aa).

This sequence belongs to the universal ribosomal protein uL23 family. As to quaternary structure, part of the 50S ribosomal subunit. Contacts protein L29, and trigger factor when it is bound to the ribosome.

Functionally, one of the early assembly proteins it binds 23S rRNA. One of the proteins that surrounds the polypeptide exit tunnel on the outside of the ribosome. Forms the main docking site for trigger factor binding to the ribosome. The polypeptide is Large ribosomal subunit protein uL23 (Anaeromyxobacter dehalogenans (strain 2CP-1 / ATCC BAA-258)).